The primary structure comprises 147 residues: UPF0047 protein sll1880 (147 aa).

Belongs to the UPF0047 family.

In Synechocystis sp. (strain ATCC 27184 / PCC 6803 / Kazusa), this protein is UPF0047 protein sll1880.